Consider the following 148-residue polypeptide: Large ribosomal subunit protein bL9 (148 aa).

This sequence belongs to the bacterial ribosomal protein bL9 family.

Binds to the 23S rRNA. This is Large ribosomal subunit protein bL9 from Salinispora tropica (strain ATCC BAA-916 / DSM 44818 / JCM 13857 / NBRC 105044 / CNB-440).